The chain runs to 116 residues: MVSIFYANRLSYSIWNTIPGKYIREELEQNGVTYNELIKYWDITDPSQALPKVNKDNVLLISAKHDQYIDLKDADYLWESWGRPTRYVYNCGHSGIVLCRKKLANDTLSFIREKLV.

This is an uncharacterized protein from Bacillus subtilis (strain 168).